A 507-amino-acid chain; its full sequence is Maturase K (507 aa).

This sequence belongs to the intron maturase 2 family. MatK subfamily.

It localises to the plastid. The protein localises to the chloroplast. In terms of biological role, usually encoded in the trnK tRNA gene intron. Probably assists in splicing its own and other chloroplast group II introns. The protein is Maturase K of Robinia pseudoacacia (Black locust).